A 97-amino-acid polypeptide reads, in one-letter code: Coiled-coil domain-containing protein 167 (97 aa).

The stretch at 2 to 78 forms a coiled coil; it reads TKKKRENLGV…LLRHENRKNT (77 aa). Residues 78–95 form a helical membrane-spanning segment; sequence TLLSVAIFTVFALLYAYW.

The protein localises to the membrane. The sequence is that of Coiled-coil domain-containing protein 167 (Ccdc167) from Mus musculus (Mouse).